Consider the following 537-residue polypeptide: Di/tripeptide-binding protein 1 (537 aa).

A signal peptide spans 1-29 (MRRNAVIRSAIMPSLLGAALVAAVPQAFA).

The protein belongs to the bacterial solute-binding protein 5 family. As to quaternary structure, the complex is composed of two ATP-binding proteins (DppD and DppF), two transmembrane proteins (DppB and DppC) and a solute-binding protein (DppA1). Five orthologous SBPs (DppA1-A5) are present in P.aeruginosa, which increases the substrate specificity of the DppBCDF transporter.

In terms of biological role, part of the ABC transporter DppABCDF involved in the uptake of various di/tripeptides. Prefers dipeptides with acidic residues at the C-terminal end. Involved in the uptake of phaseolotoxin, a toxic tripeptide inhibiting the enzyme ornithine carbamoyltransferase. The polypeptide is Di/tripeptide-binding protein 1 (Pseudomonas aeruginosa (strain UCBPP-PA14)).